The primary structure comprises 316 residues: Olfactory receptor 12D3 (316 aa).

Topologically, residues 1–23 (MENVTTMNEFLLLGLTGVQELQP) are extracellular. An N-linked (GlcNAc...) asparagine glycan is attached at N3. Residues 24 to 44 (FFFGIFLIIYLINLIGNGSIL) traverse the membrane as a helical segment. The Cytoplasmic portion of the chain corresponds to 45-52 (VMVVLEPQ). The helical transmembrane segment at 53-73 (LHSPMYFFLGNLSCLDISYSS) threads the bilayer. Residues 74-97 (VTLPKLLVNLVCSRRAISFLGCIT) are Extracellular-facing. The cysteines at positions 95 and 187 are disulfide-linked. The chain crosses the membrane as a helical span at residues 98–118 (QLHFFHFLGSTEAILLAIMAF). Over 119-137 (DRFVAICNPLRYTVIMNPQ) the chain is Cytoplasmic. A helical membrane pass occupies residues 138-158 (VCILLAAAAWLISFFYALMHS). Residues 159–195 (VMTAHLSFCGSQKLNHFFYDVKPLLELACSDTLLNQW) lie on the Extracellular side of the membrane. Residues 196–215 (LLSIVTGSISMGAFFLTLLS) traverse the membrane as a helical segment. At 216–236 (CFYVIGFLLFKNRSCRILHKA) the chain is on the cytoplasmic side. The helical transmembrane segment at 237–257 (LSTCASHFMVVCLFYGPVGFT) threads the bilayer. The Extracellular portion of the chain corresponds to 258–270 (YIRPASATSMIQD). Residues 271-291 (RIMAIMYSAVTPVLNPLIYTL) traverse the membrane as a helical segment. Topologically, residues 292–316 (RNKEVMMALKKIFGRKLFKDWQQHH) are cytoplasmic.

The protein belongs to the G-protein coupled receptor 1 family.

Its subcellular location is the cell membrane. Its function is as follows. Odorant receptor. The chain is Olfactory receptor 12D3 (OR12D3) from Homo sapiens (Human).